We begin with the raw amino-acid sequence, 35 residues long: Photosystem II reaction center protein T (35 aa).

The helical transmembrane segment at 3–23 (ALVYTFLLISTLGIIFFAIFF) threads the bilayer.

Belongs to the PsbT family. PSII is composed of 1 copy each of membrane proteins PsbA, PsbB, PsbC, PsbD, PsbE, PsbF, PsbH, PsbI, PsbJ, PsbK, PsbL, PsbM, PsbT, PsbY, PsbZ, Psb30/Ycf12, at least 3 peripheral proteins of the oxygen-evolving complex and a large number of cofactors. It forms dimeric complexes.

The protein resides in the plastid. The protein localises to the chloroplast thylakoid membrane. Its function is as follows. Found at the monomer-monomer interface of the photosystem II (PS II) dimer, plays a role in assembly and dimerization of PSII. PSII is a light-driven water plastoquinone oxidoreductase, using light energy to abstract electrons from H(2)O, generating a proton gradient subsequently used for ATP formation. The sequence is that of Photosystem II reaction center protein T from Welwitschia mirabilis (Tree tumbo).